The chain runs to 460 residues: Baeyer-Villiger oxidase AgnL3 (460 aa).

This sequence belongs to the questin oxidase family. NADPH is required as a cofactor.

Its pathway is secondary metabolite biosynthesis. Functionally, baeyer-Villiger oxidase; part of the gene cluster that mediates the biosynthesis of agnestins, dihydroxy-xanthone metabolites. The pathway begins with the assembly and cyclization of atrochrysone thioester by the non-reducing polyketide synthase Agnpks1. The atrochrysone carboxyl ACP thioesterase AgnL7 then breaks the thioester bond and releases the atrochrysone carboxylic acid as the first enzyme-free intermediate. The decarboxylase AgnL1 then catalyzes the concerted decarboxylation-elimination required to convert atochrysone carboxylic acid into emodin anthrone, which is further oxidized to emodin by the anthrone oxygenase AgnL2. Emodin then undergoes reduction catalyzed by the oxidoreductase AgnL4 to yield the dihydroquinone tautomer which is the substrate for reduction by the short chain dehydrogenase AgnL6 reduction to produce hydroxyketone, followed by AgnL8 dehydration and likely spontaneous autoxidation to chrysophanol. Baeyer-Villiger oxidation by the oxidase AgnL3 leads to monodictyphenone via cleavage of the C-10/C-10a bond of chrysophanol. Alternative cleavage at the C-4a/C-10 bond of chrysophanol also leads to the formation some cephalone F. Further conversion to agnestins A and B, requires reduction to dihydro-monodictyphenone, oxidation to agnestin C probably via an epoxide, and rearrangement to either agnestin A or agnestin B directly, although agnestin A or agnestin B can also interconvert. Within the cluster, AgnR1 is the only unassigned oxidoreductase present which could be involved in this conversion. However, AgnR1 seems not to be involved in this step, and thus genes involved in the proposed oxidation/reduction may be located elsewhere on the genome. Further agnestin A derivatives are probably formed by spontaneous decarboxylations, dehydrations and methanolysis reactions. This Paecilomyces divaricatus (Penicillium divaricatum) protein is Baeyer-Villiger oxidase AgnL3.